A 536-amino-acid chain; its full sequence is Alpha-1,3-mannosyl-glycoprotein 4-beta-N-acetylglucosaminyltransferase A (536 aa).

Residues 1 to 6 lie on the Cytoplasmic side of the membrane; sequence MRLRNG. Residues 7-27 form a helical; Signal-anchor for type II membrane protein membrane-spanning segment; that stretch reads TVATALVFITTFLSLSWYTAW. Residues 28-54 adopt a coiled-coil conformation; sequence QNGKEKLMAYQREFHALKERLRIAEHR. Over 28–536 the chain is Lumenal; sequence QNGKEKLMAY…EIHIKRNPAD (509 aa). Residues N77 and N458 are each glycosylated (N-linked (GlcNAc...) asparagine).

The protein belongs to the glycosyltransferase 54 family. The cofactor is a divalent metal cation. Post-translationally, N-glycosylated.

It localises to the golgi apparatus membrane. The protein resides in the secreted. It carries out the reaction N(4)-{beta-D-GlcNAc-(1-&gt;2)-alpha-D-Man-(1-&gt;3)-[beta-D-GlcNAc-(1-&gt;2)-alpha-D-Man-(1-&gt;6)]-beta-D-Man-(1-&gt;4)-beta-D-GlcNAc-(1-&gt;4)-beta-D-GlcNAc}-L-asparaginyl-[protein] + UDP-N-acetyl-alpha-D-glucosamine = N(4)-{beta-D-GlcNAc-(1-&gt;2)-[beta-D-GlcNAc-(1-&gt;4)]-alpha-D-Man-(1-&gt;3)-[beta-D-GlcNAc-(1-&gt;2)-alpha-D-Man-(1-&gt;6)]-beta-D-Man-(1-&gt;4)-beta-D-GlcNAc-(1-&gt;4)-beta-D-GlcNAc}-L-asparaginyl-[protein] + UDP + H(+). The catalysed reaction is an N(4)-{beta-D-GlcNAc-(1-&gt;2)-alpha-D-Man-(1-&gt;3)-[alpha-D-Man-(1-&gt;6)]-beta-D-Man-(1-&gt;4)-beta-D-GlcNAc-(1-&gt;4)-beta-D-GlcNAc}-L-asparaginyl-[protein] + UDP-N-acetyl-alpha-D-glucosamine = an N(4)-{beta-D-GlcNAc-(1-&gt;2)-[beta-D-GlcNAc-(1-&gt;4)]-alpha-D-Man-(1-&gt;3)-[alpha-D-Man-(1-&gt;6)]-beta-D-Man-(1-&gt;4)-beta-D-GlcNAc-(1-&gt;4)-beta-D-GlcNAc}-L-asparaginyl-[protein] + UDP + H(+). It catalyses the reaction an N(4)-{beta-D-GlcNAc-(1-&gt;2)-alpha-D-Man-(1-&gt;3)-[beta-D-GlcNAc-(1-&gt;2)-[beta-D-GlcNAc-(1-&gt;6)]-alpha-D-Man-(1-&gt;6)]-beta-D-Man-(1-&gt;4)-beta-D-GlcNAc-(1-&gt;4)-beta-D-GlcNAc}-L-asparaginyl-[protein] + UDP-N-acetyl-alpha-D-glucosamine = an N(4)-{beta-D-GlcNAc-(1-&gt;2)-[beta-D-GlcNAc-(1-&gt;4)]-alpha-D-Man-(1-&gt;3)-[beta-D-GlcNAc-(1-&gt;2)-[beta-D-GlcNAc-(1-&gt;6)]-alpha-D-Man-(1-&gt;6)]-beta-D-Man-(1-&gt;4)-beta-D-GlcNAc-(1-&gt;4)-beta-D-GlcNAc}-L-asparaginyl-[protein] + UDP + H(+). The enzyme catalyses an N(4)-{beta-D-GlcNAc-(1-&gt;2)-alpha-D-Man-(1-&gt;3)-[beta-D-GlcNAc-(1-&gt;2)-alpha-D-Man-(1-&gt;6)]-beta-D-Man-(1-&gt;4)-beta-D-GlcNAc-(1-&gt;4)-[alpha-L-Fuc-(1-&gt;6)]-beta-D-GlcNAc}-L-asparaginyl-[protein] + UDP-N-acetyl-alpha-D-glucosamine = N(4)-{beta-D-GlcNAc-(1-&gt;2)-[beta-D-GlcNAc-(1-&gt;4)]-alpha-D-Man-(1-&gt;3)-[beta-D-GlcNAc-(1-&gt;2)-alpha-D-Man-(1-&gt;6)]-beta-D-Man-(1-&gt;4)-beta-D-GlcNAc-(1-&gt;4)-[alpha-L-Fuc-(1-&gt;6)]-beta-D-GlcNAc}-asparaginyl-[protein] + UDP + H(+). It carries out the reaction an N(4)-{beta-D-GlcNAc-(1-&gt;2)-alpha-D-Man-(1-&gt;3)-[beta-D-Gal-(1-&gt;4)-beta-D-GlcNAc-(1-&gt;2)-alpha-D-Man-(1-&gt;6)]-beta-D-Man-(1-&gt;4)-beta-D-GlcNAc-(1-&gt;4)-beta-D-GlcNAc}-L-asparaginyl-[protein] + UDP-N-acetyl-alpha-D-glucosamine = an N(4)-{beta-D-GlcNAc-(1-&gt;2)-[beta-D-GlcNAc-(1-&gt;4)]-alpha-D-Man-(1-&gt;3)-[beta-D-Gal-(1-&gt;4)-beta-D-GlcNAc-(1-&gt;2)-alpha-D-Man-(1-&gt;6)]-beta-D-Man-(1-&gt;4)-beta-D-GlcNAc-(1-&gt;4)-beta-D-GlcNAc}-L-asparaginyl-[protein] + UDP + H(+). The catalysed reaction is N(4)-{beta-D-GlcNAc-(1-&gt;2)-alpha-D-Man-(1-&gt;3)-[alpha-D-Man-(1-&gt;3)-{alpha-D-Man-(1-&gt;6)}-alpha-D-Man-(1-&gt;6)]-beta-D-Man-(1-&gt;4)-beta-D-GlcNAc-(1-&gt;4)-beta-D-GlcNAc}-asparaginyl-[protein] + UDP-N-acetyl-alpha-D-glucosamine = N(4)-{beta-D-GlcNAc-(1-&gt;2)-[beta-D-GlcNAc-(1-&gt;4)]-alpha-D-Man-(1-&gt;3)-[alpha-D-Man-(1-&gt;3)-{alpha-D-Man-(1-&gt;6)}-alpha-D-Man-(1-&gt;6)]-beta-D-Man-(1-&gt;4)-beta-D-GlcNAc-(1-&gt;4)-beta-D-GlcNAc}-asparaginyl-[protein] + UDP + H(+). It catalyses the reaction N(4)-{beta-D-GlcNAc-(1-&gt;2)-alpha-D-Man-(1-&gt;3)-beta-D-Man-(1-&gt;4)-beta-D-GlcNAc-(1-&gt;4)-beta-D-GlcNAc}-asparaginyl-[protein] + UDP-N-acetyl-alpha-D-glucosamine = N(4)-{beta-D-GlcNAc-(1-&gt;2)-[beta-D-GlcNAc-(1-&gt;4)]-alpha-D-Man-(1-&gt;3)-beta-D-Man-(1-&gt;4)-beta-D-GlcNAc-(1-&gt;4)-beta-D-GlcNAc}-asparaginyl-[protein] + UDP + H(+). It participates in protein modification; protein glycosylation. With respect to regulation, inhibited by UDP. Glycosyltransferase that catalyze the transfer of GlcNAc from UDP-GlcNAc to the GlcNAcbeta1-2Manalpha1-3 arm of the core structure of N-linked glycans through a beta1-4 linkage and participates in the production of tri- and tetra-antennary N-linked sugar chains. Involved in glucose transport by mediating SLC2A2/GLUT2 glycosylation, thereby controlling cell-surface expression of SLC2A2 in pancreatic beta cells. The sequence is that of Alpha-1,3-mannosyl-glycoprotein 4-beta-N-acetylglucosaminyltransferase A from Xenopus tropicalis (Western clawed frog).